The primary structure comprises 404 residues: tRNA-specific 2-thiouridylase MnmA (404 aa).

ATP is bound by residues 42–49 and Leu68; that span reads GLSGGVDS. Cys129 functions as the Nucleophile in the catalytic mechanism. Cysteines 129 and 239 form a disulfide. Residue Gly154 coordinates ATP. Residues 189–191 form an interaction with tRNA region; the sequence is KDQ. Residue Cys239 is the Cysteine persulfide intermediate of the active site. The segment at 344 to 345 is interaction with tRNA; that stretch reads RY.

Belongs to the MnmA/TRMU family.

It localises to the cytoplasm. The enzyme catalyses S-sulfanyl-L-cysteinyl-[protein] + uridine(34) in tRNA + AH2 + ATP = 2-thiouridine(34) in tRNA + L-cysteinyl-[protein] + A + AMP + diphosphate + H(+). In terms of biological role, catalyzes the 2-thiolation of uridine at the wobble position (U34) of tRNA, leading to the formation of s(2)U34. This is tRNA-specific 2-thiouridylase MnmA from Prochlorococcus marinus (strain NATL1A).